The following is a 210-amino-acid chain: tRNA (guanine-N(7)-)-methyltransferase (210 aa).

Positions 36, 61, 90, and 112 each coordinate S-adenosyl-L-methionine. Residue D112 is part of the active site. Substrate is bound by residues K116, D148, and 188–191 (TEYE).

It belongs to the class I-like SAM-binding methyltransferase superfamily. TrmB family.

The enzyme catalyses guanosine(46) in tRNA + S-adenosyl-L-methionine = N(7)-methylguanosine(46) in tRNA + S-adenosyl-L-homocysteine. Its pathway is tRNA modification; N(7)-methylguanine-tRNA biosynthesis. In terms of biological role, catalyzes the formation of N(7)-methylguanine at position 46 (m7G46) in tRNA. The protein is tRNA (guanine-N(7)-)-methyltransferase of Mycoplasma pneumoniae (strain ATCC 29342 / M129 / Subtype 1) (Mycoplasmoides pneumoniae).